The chain runs to 108 residues: ATP synthase peripheral stalk subunit F6, mitochondrial (108 aa).

Residues 1 to 32 (MTVQRIFRLSSVLRSAVSVHLRRNIGVTAVAF) constitute a mitochondrion transit peptide. 3 positions are modified to N6-acetyllysine: Lys41, Lys46, and Lys79. N6-acetyllysine; alternate occurs at positions 84 and 99. An N6-succinyllysine; alternate mark is found at Lys84 and Lys99. Residue Lys105 is modified to N6-acetyllysine. The residue at position 108 (Ser108) is a Phosphoserine.

The protein belongs to the eukaryotic ATPase subunit F6 family. In terms of assembly, component of the ATP synthase complex composed at least of ATP5F1A/subunit alpha, ATP5F1B/subunit beta, ATP5MC1/subunit c (homooctomer), MT-ATP6/subunit a, MT-ATP8/subunit 8, ATP5ME/subunit e, ATP5MF/subunit f, ATP5MG/subunit g, ATP5MK/subunit k, ATP5MJ/subunit j, ATP5F1C/subunit gamma, ATP5F1D/subunit delta, ATP5F1E/subunit epsilon, ATP5PF/subunit F6, ATP5PB/subunit b, ATP5PD/subunit d, ATP5PO/subunit OSCP. ATP synthase complex consists of a soluble F(1) head domain (subunits alpha(3) and beta(3)) - the catalytic core - and a membrane F(0) domain - the membrane proton channel (subunits c, a, 8, e, f, g, k and j). These two domains are linked by a central stalk (subunits gamma, delta, and epsilon) rotating inside the F1 region and a stationary peripheral stalk (subunits F6, b, d, and OSCP).

It is found in the mitochondrion. Its subcellular location is the mitochondrion inner membrane. Functionally, subunit F6, of the mitochondrial membrane ATP synthase complex (F(1)F(0) ATP synthase or Complex V) that produces ATP from ADP in the presence of a proton gradient across the membrane which is generated by electron transport complexes of the respiratory chain. ATP synthase complex consist of a soluble F(1) head domain - the catalytic core - and a membrane F(1) domain - the membrane proton channel. These two domains are linked by a central stalk rotating inside the F(1) region and a stationary peripheral stalk. During catalysis, ATP synthesis in the catalytic domain of F(1) is coupled via a rotary mechanism of the central stalk subunits to proton translocation. In vivo, can only synthesize ATP although its ATP hydrolase activity can be activated artificially in vitro. Part of the complex F(0) domain. Part of the complex F(0) domain and the peripheric stalk, which acts as a stator to hold the catalytic alpha(3)beta(3) subcomplex and subunit a/ATP6 static relative to the rotary elements. This is ATP synthase peripheral stalk subunit F6, mitochondrial from Rattus norvegicus (Rat).